The chain runs to 392 residues: Monooxygenase AgnR1 (392 aa).

Positions 1 to 20 (MSAPQKCAAVVVGAGPAGLA) are cleaved as a signal peptide. N-linked (GlcNAc...) asparagine glycosylation is present at Asn-134.

Its function is as follows. Monooxygenase; part of the gene cluster that mediates the biosynthesis of agnestins, dihydroxy-xanthone metabolites. The pathway begins with the assembly and cyclization of atrochrysone thioester by the non-reducing polyketide synthase Agnpks1. The atrochrysone carboxyl ACP thioesterase AgnL7 then breaks the thioester bond and releases the atrochrysone carboxylic acid as the first enzyme-free intermediate. The decarboxylase AgnL1 then catalyzes the concerted decarboxylation-elimination required to convert atochrysone carboxylic acid into emodin anthrone, which is further oxidized to emodin by the anthrone oxygenase AgnL2. Emodin then undergoes reduction catalyzed by the oxidoreductase AgnL4 to yield the dihydroquinone tautomer which is the substrate for reduction by the short chain dehydrogenase AgnL6 reduction to produce hydroxyketone, followed by AgnL8 dehydration and likely spontaneous autoxidation to chrysophanol. Baeyer-Villiger oxidation by the oxidase AgnL3 leads to monodictyphenone via cleavage of the C-10/C-10a bond of chrysophanol. Alternative cleavage at the C-4a/C-10 bond of chrysophanol also leads to the formation some cephalone F. Further conversion to agnestins A and B, requires reduction to dihydro-monodictyphenone, oxidation to agnestin C probably via an epoxide, and rearrangement to either agnestin A or agnestin B directly, although agnestin A or agnestin B can also interconvert. Within the cluster, AgnR1 is the only unassigned oxidoreductase present which could be involved in this conversion. However, AgnR1 seems not to be involved in this step, and thus genes involved in the proposed oxidation/reduction may be located elsewhere on the genome. Further agnestin A derivatives are probably formed by spontaneous decarboxylations, dehydrations and methanolysis reactions. The chain is Monooxygenase AgnR1 from Paecilomyces divaricatus (Penicillium divaricatum).